The chain runs to 693 residues: Sister chromatid cohesion 1 protein 3 (693 aa).

Disordered stretches follow at residues 167–250 (IPMD…PGTV), 262–361 (DLSP…KNFD), 460–511 (PVSP…TFDN), and 545–573 (TQSGNWETESYRTEPSTSTVPEDLPGQRN). Composition is skewed to basic and acidic residues over residues 178–201 (VSRHTGEIDVETAHETGPDNEPRD) and 232–243 (TEERIPNSERND). Polar residues predominate over residues 264-277 (SPTSHPSFAAQQQD). Basic and acidic residues predominate over residues 278 to 295 (VRVERTESLDETLNEKEP). Low complexity predominate over residues 316–325 (RSGSPGSAAG). Polar residues-rich tracts occupy residues 465–483 (PDSTNPDSTVQLSPAQQTE) and 545–564 (TQSGNWETESYRTEPSTSTV).

This sequence belongs to the rad21 family. Component of the cohesin complex. Low expression in shoots, buds, siliques, leaves and roots. Found in, but not limited to, actively dividing cells: in procambium, protoderm and ground meristem in roots, and in shoot and floral meristems.

It is found in the nucleus. May be involved in sister chromatid cohesion during mitosis. This is Sister chromatid cohesion 1 protein 3 (SYN3) from Arabidopsis thaliana (Mouse-ear cress).